The sequence spans 346 residues: MLVKNTWYVAGMATDCSRKPLARTFLNEKVVLFRTHDGHAVALEDRCCHRLAPLSLGDVEDAGIRCRYHGMVFNASGACVEIPGQEQIPPGMCVRRFPLVERHGLLWIWMGDPARANPDDIVDELWNGAPEWRTDSGYIHYQANYQLIVDNLLDFTHLAWVHPTTLGTDSAASLKPVIERDTTGTGKLTITRWYLNDDMSNLHKGVAKFEGKADRWQIYQWSPPALLRMDTGSAPTGTGAPEGRRVPEAVQFRHTSIQTPETETTSHYWFCQARNFDLDDEALTEKIYQGVVVAFEEDRTMIEAQQKILSQVPDRPMVPIAADAGLNQGRWLLDRLLKAENGGTAP.

The region spanning 7–108 (WYVAGMATDC…LVERHGLLWI (102 aa)) is the Rieske domain. The [2Fe-2S] cluster site is built by cysteine 47, histidine 49, cysteine 66, and histidine 69.

As to quaternary structure, homotetramer. Part of the p-toluenesulfonate methyl-monooxygenase complex TsaBM, comprising the reductase TsaB and the oxygenase TsaM. Requires [2Fe-2S] cluster as cofactor.

The enzyme catalyses toluene-4-sulfonate + NADH + O2 + H(+) = 4-(hydroxymethyl)benzenesulfonate + NAD(+) + H2O. Its function is as follows. Involved in the toluene-4-sulfonate degradation pathway. Does not discriminate between the sulfonate and the carboxyl substituents and can also be involved in the p-toluenecarboxylate degradation pathway. The polypeptide is Putative toluene-4-sulfonate monooxygenase system iron-sulfur subunit TsaM2 (tsaM2) (Comamonas testosteroni (Pseudomonas testosteroni)).